We begin with the raw amino-acid sequence, 185 residues long: Ribosome-recycling factor (185 aa).

It belongs to the RRF family.

It localises to the cytoplasm. Responsible for the release of ribosomes from messenger RNA at the termination of protein biosynthesis. May increase the efficiency of translation by recycling ribosomes from one round of translation to another. The protein is Ribosome-recycling factor of Saccharopolyspora erythraea (strain ATCC 11635 / DSM 40517 / JCM 4748 / NBRC 13426 / NCIMB 8594 / NRRL 2338).